Here is a 305-residue protein sequence, read N- to C-terminus: Flagellin FlaB2 (305 aa).

A propeptide spans M1–G18 (propeptide).

It belongs to the archaeal flagellin family. In terms of processing, glycosylated.

It localises to the archaeal flagellum. Functionally, flagellin is the subunit protein which polymerizes to form the filaments of archaeal flagella. The polypeptide is Flagellin FlaB2 (Saccharolobus shibatae (strain ATCC 51178 / DSM 5389 / JCM 8931 / NBRC 15437 / B12) (Sulfolobus shibatae)).